Here is a 368-residue protein sequence, read N- to C-terminus: DNA replication and repair protein RecF (368 aa).

30-37 (GNNAQGKT) lines the ATP pocket.

It belongs to the RecF family.

It is found in the cytoplasm. Functionally, the RecF protein is involved in DNA metabolism; it is required for DNA replication and normal SOS inducibility. RecF binds preferentially to single-stranded, linear DNA. It also seems to bind ATP. This chain is DNA replication and repair protein RecF, found in Streptococcus pyogenes serotype M6 (strain ATCC BAA-946 / MGAS10394).